The sequence spans 311 residues: Ketoisovalerate oxidoreductase subunit VorB (311 aa).

In terms of assembly, heterotetramer of one alpha, one beta, one delta and one gamma chain.

It carries out the reaction 3-methyl-2-oxobutanoate + 2 oxidized [2Fe-2S]-[ferredoxin] + CoA = 2-methylpropanoyl-CoA + 2 reduced [2Fe-2S]-[ferredoxin] + CO2 + H(+). This chain is Ketoisovalerate oxidoreductase subunit VorB (vorB), found in Pyrococcus abyssi (strain GE5 / Orsay).